The chain runs to 193 residues: Oleosin S1-2 (193 aa).

Ala-2 is subject to N-acetylalanine. The interval Ala-2–Ala-39 is polar. Helical transmembrane passes span Val-37–Thr-57, Ile-66–Ile-86, and Gly-87–Met-107. The tract at residues Val-40–His-113 is hydrophobic. Residues Ala-139–Thr-193 form a disordered region. The segment covering Arg-142–Thr-193 has biased composition (basic and acidic residues).

This sequence belongs to the oleosin family.

It localises to the lipid droplet. Its subcellular location is the membrane. Functionally, may have a structural role to stabilize the lipid body during desiccation of the seed by preventing coalescence of the oil. Probably interacts with both lipid and phospholipid moieties of lipid bodies. May also provide recognition signals for specific lipase anchorage in lipolysis during seedling growth. In Brassica napus (Rape), this protein is Oleosin S1-2 (S1).